A 504-amino-acid polypeptide reads, in one-letter code: Glucose-6-phosphate isomerase (504 aa).

E333 functions as the Proton donor in the catalytic mechanism. Active-site residues include H364 and K473.

Belongs to the GPI family.

The protein resides in the cytoplasm. The catalysed reaction is alpha-D-glucose 6-phosphate = beta-D-fructose 6-phosphate. The protein operates within carbohydrate biosynthesis; gluconeogenesis. It participates in carbohydrate degradation; glycolysis; D-glyceraldehyde 3-phosphate and glycerone phosphate from D-glucose: step 2/4. Its function is as follows. Catalyzes the reversible isomerization of glucose-6-phosphate to fructose-6-phosphate. The polypeptide is Glucose-6-phosphate isomerase (Xanthomonas axonopodis pv. citri (strain 306)).